The primary structure comprises 213 residues: AN1-type zinc finger protein 5 (213 aa).

The A20-type zinc finger occupies 8–42 (TPGPMLCSTGCGFYGNPRTNGMCSVCYKEHLQRQQ). Zn(2+) is bound by residues C14, C18, C30, and C33. Positions 39–149 (QRQQNSGRMS…EEKAPELPKP (111 aa)) are disordered. Positions 40–66 (RQQNSGRMSPMGTASGSNSPTSDSASV) are enriched in polar residues. Phosphoserine is present on residues S48 and S58. Over residues 120–138 (SEPVVTQPSPSVSQPSSSQ) the composition is skewed to low complexity. Basic and acidic residues predominate over residues 139-148 (SEEKAPELPK). The AN1-type zinc finger occupies 148-194 (KPKKNRCFMCRKKVGLTGFDCRCGNLFCGLHRYSDKHNCPYDYKAEA). C154, C157, C168, C170, C175, H178, H184, and C186 together coordinate Zn(2+). K209 bears the N6-acetyllysine mark.

Homooligomer and/or heterooligomer. Interacts (via A20-type domain) with IKBKG and RIPK1 and with TRAF6 (via AN1-type domain). Interacts with ubiquitin and polyubiquitinated proteins. Identified in a heterotrimeric complex with ubiquitin and SQSTM1, where ZFAND5 and SQSTM1 both interact with the same ubiquitin molecule.

It is found in the cytoplasm. Functionally, involved in protein degradation via the ubiquitin-proteasome system. May act by anchoring ubiquitinated proteins to the proteasome. Plays a role in ubiquitin-mediated protein degradation during muscle atrophy. Plays a role in the regulation of NF-kappa-B activation and apoptosis. Inhibits NF-kappa-B activation triggered by overexpression of RIPK1 and TRAF6 but not of RELA. Also inhibits tumor necrosis factor (TNF), IL-1 and TLR4-induced NF-kappa-B activation in a dose-dependent manner. Overexpression sensitizes cells to TNF-induced apoptosis. Is a potent inhibitory factor for osteoclast differentiation. This is AN1-type zinc finger protein 5 (Zfand5) from Rattus norvegicus (Rat).